Reading from the N-terminus, the 348-residue chain is GMP reductase 2 (348 aa).

NADP(+) is bound by residues 26 to 27 (SR), lysine 78, 129 to 131 (DVA), and 180 to 181 (IG). 3 residues coordinate K(+): glycine 181, glycine 183, and cysteine 186. Cysteine 186 functions as the Thioimidate intermediate in the catalytic mechanism. Threonine 188 acts as the Proton donor/acceptor in catalysis. Arginine 189 contributes to the K(+) binding site. GMP-binding positions include 219-221 (DGG), 242-243 (GG), 268-270 (GMS), and 286-290 (RASEG). Residues methionine 269 and 285-286 (YR) contribute to the NADP(+) site. Lysine 291 is subject to N6-acetyllysine. Residue 314 to 317 (STCT) participates in NADP(+) binding.

Belongs to the IMPDH/GMPR family. GuaC type 1 subfamily. As to quaternary structure, homotetramer.

It carries out the reaction IMP + NH4(+) + NADP(+) = GMP + NADPH + 2 H(+). In terms of biological role, catalyzes the irreversible NADPH-dependent deamination of GMP to IMP. It functions in the conversion of nucleobase, nucleoside and nucleotide derivatives of G to A nucleotides, and in maintaining the intracellular balance of A and G nucleotides. Plays a role in modulating cellular differentiation. This chain is GMP reductase 2, found in Bos taurus (Bovine).